A 338-amino-acid polypeptide reads, in one-letter code: Nicotinate-nucleotide--dimethylbenzimidazole phosphoribosyltransferase (338 aa).

Glu305 (proton acceptor) is an active-site residue.

The protein belongs to the CobT family.

It carries out the reaction 5,6-dimethylbenzimidazole + nicotinate beta-D-ribonucleotide = alpha-ribazole 5'-phosphate + nicotinate + H(+). It participates in nucleoside biosynthesis; alpha-ribazole biosynthesis; alpha-ribazole from 5,6-dimethylbenzimidazole: step 1/2. Its function is as follows. Catalyzes the synthesis of alpha-ribazole-5'-phosphate from nicotinate mononucleotide (NAMN) and 5,6-dimethylbenzimidazole (DMB). The polypeptide is Nicotinate-nucleotide--dimethylbenzimidazole phosphoribosyltransferase (Rhizobium etli (strain CIAT 652)).